The primary structure comprises 202 residues: Protein-methionine-sulfoxide reductase heme-binding subunit MsrQ (202 aa).

The next 6 helical transmembrane spans lie at 8–28, 42–62, 75–95, 110–130, 147–167, and 169–189; these read LAVFLGALAVPAWWLYQAWIF, LGLGALVLLLLTLAMTPLQKL, LGLWCFTYVLLHLSAYCVFIL, PYIIVGMLGFICLFLLAITSN, LVYLILGLGLLHMLWVVRADL, and EWTLYAVVGASLMLLRLPSIA.

Belongs to the MsrQ family. In terms of assembly, heterodimer of a catalytic subunit (MsrP) and a heme-binding subunit (MsrQ). FMN is required as a cofactor. It depends on heme b as a cofactor.

Its subcellular location is the cell inner membrane. Part of the MsrPQ system that repairs oxidized periplasmic proteins containing methionine sulfoxide residues (Met-O), using respiratory chain electrons. Thus protects these proteins from oxidative-stress damage caused by reactive species of oxygen and chlorine generated by the host defense mechanisms. MsrPQ is essential for the maintenance of envelope integrity under bleach stress, rescuing a wide series of structurally unrelated periplasmic proteins from methionine oxidation. MsrQ provides electrons for reduction to the reductase catalytic subunit MsrP, using the quinone pool of the respiratory chain. This chain is Protein-methionine-sulfoxide reductase heme-binding subunit MsrQ, found in Pseudomonas aeruginosa (strain LESB58).